The sequence spans 325 residues: Protein VP6-B (325 aa).

2 disordered regions span residues 23 to 123 (INLI…TIGA) and 176 to 229 (VAEQ…EEQA). Basic and acidic residues-rich tracts occupy residues 32-52 (ESGK…ESKD) and 61-79 (SQKK…DRRI). Residues 106–123 (KVGGGGGNADAGVGTIGA) are compositionally biased toward gly residues. Composition is skewed to basic and acidic residues over residues 176-201 (VAEQ…AAER) and 210-226 (PHGD…KTSE).

Belongs to the orbivirus VP6 family.

It localises to the virion. Its function is as follows. Surrounds and interacts with the genomic dsRNA. Possesses ss- and dsRNA-binding capacity. Its hydrophilic nature and capability to bind ss- and dsRNA suggest that it interacts with BTV genomic RNA. The protein is Protein VP6-B (Segment-9) of Bluetongue virus 10 (isolate USA) (BTV 10).